The following is a 185-amino-acid chain: Putative lipoprotein LprB (185 aa).

The first 24 residues, 1-24, serve as a signal peptide directing secretion; it reads MRRKVRRLTLAVSALVALFPAVAG. Cys25 carries the N-palmitoyl cysteine lipid modification. Cys25 carries S-diacylglycerol cysteine lipidation. Residues 26–50 are disordered; the sequence is SDSGDNKPGATIPSTPANAEGRHGP.

It localises to the cell membrane. In Mycobacterium tuberculosis (strain CDC 1551 / Oshkosh), this protein is Putative lipoprotein LprB (lprB).